A 1077-amino-acid polypeptide reads, in one-letter code: Protein hairless (1077 aa).

7 disordered regions span residues 14–75 (NRQT…SNNN), 97–141 (SSTS…HAKT), 269–322 (PSAA…SRPR), 340–368 (TLGR…DQQP), 408–504 (IEKP…PKAK), 533–876 (TTTS…PTSN), and 976–1077 (GQPA…LSKH). Low complexity-rich tracts occupy residues 26-75 (NINS…SNNN), 115-130 (TTTP…SSST), 269-286 (PSAA…VTTA), and 293-308 (STSL…IQSS). Basic and acidic residues-rich tracts occupy residues 408 to 439 (IEKP…ESKE) and 449 to 459 (QPKDETVDVEM). The segment covering 596 to 607 (GSGGASSGGAGG) has biased composition (gly residues). Residues 640–684 (PGSSSSSTSPATLSTQPTRLNSSYSIHSLLGGSSGSGSSSFSSSG) are compositionally biased toward low complexity. The span at 704 to 713 (SMYQPSSSSY) shows a compositional bias: polar residues. Ser-720, Ser-723, Ser-746, and Ser-753 each carry phosphoserine. A compositionally biased stretch (polar residues) spans 772–782 (PSTSGSASQDL). Low complexity-rich tracts occupy residues 783-798 (SPPR…TPRT) and 811-829 (ASPS…RSAS). Residues 837-846 (QQQPHLQRSS) show a composition bias toward polar residues. The span at 865-876 (AGSPTSAPPTSN) shows a compositional bias: low complexity. Positions 984–995 (THPHLAHPHQHP) are enriched in basic residues. 2 stretches are compositionally biased toward low complexity: residues 996-1012 (HPAA…LATP) and 1023-1055 (SATS…SSSA). The span at 1056 to 1070 (MFHTSSLRNEQSSDL) shows a compositional bias: polar residues.

As to expression, during embryogenesis expression is primarily in endo- and mesodermal cell layers. Ovary, embryos, larval and pupal imaginal disks.

Its subcellular location is the nucleus. Functionally, is a potent antagonist of neurogenic gene activity during sensory organ development. The expression of distinct cell fates by the trichogen (shaft) / tormogen (socket) sister cell pair depends on the level of H activity. A certain threshold level of H activity is required, below which both sister cells adopt the tormogen fate. This is Protein hairless (H) from Drosophila melanogaster (Fruit fly).